Here is a 951-residue protein sequence, read N- to C-terminus: Plasma membrane ATPase (951 aa).

The next 4 membrane-spanning stretches (helical) occupy residues 61-81, 93-113, 243-263, and 277-297; these read FLGF…IMAI, WEDF…SFIE, IGNF…IVMF, and LLVL…SVTM. Residue Asp329 is the 4-aspartylphosphate intermediate of the active site. Mg(2+) contacts are provided by Asp588 and Asp592. The next 6 membrane-spanning stretches (helical) occupy residues 647 to 667, 671 to 691, 709 to 729, 752 to 772, 785 to 805, and 814 to 834; these read IYAV…ALIW, FSPF…MTIS, IFAT…IFFW, EMMS…IFVT, LLLV…AVYA, and GIGW…YFPL.

This sequence belongs to the cation transport ATPase (P-type) (TC 3.A.3) family. Type IIIA subfamily.

It is found in the cell membrane. It carries out the reaction ATP + H2O + H(+)(in) = ADP + phosphate + 2 H(+)(out). In terms of biological role, the plasma membrane ATPase of plants and fungi is a hydrogen ion pump. The proton gradient it generates drives the active transport of nutrients by H(+)-symport. The resulting external acidification and/or internal alkinization may mediate growth responses. The chain is Plasma membrane ATPase from Oryza sativa subsp. japonica (Rice).